Reading from the N-terminus, the 460-residue chain is Ammonium transporter Rh type C (460 aa).

The Cytoplasmic segment spans residues M1–W9. A helical membrane pass occupies residues R10–V30. Over R31–Y61 the chain is Extracellular. A glycan (N-linked (GlcNAc...) asparagine) is linked at N48. The helical transmembrane segment at P62–L82 threads the bilayer. Over Q83–S89 the chain is Cytoplasmic. The chain crosses the membrane as a helical span at residues V90–W110. Residues L111 to N125 lie on the Extracellular side of the membrane. Residues L126–G145 traverse the membrane as a helical segment. Residues K146–Q151 lie on the Cytoplasmic side of the membrane. A helical membrane pass occupies residues L152 to L174. Over E175–S179 the chain is Extracellular. The chain crosses the membrane as a helical span at residues G180–L200. The Cytoplasmic portion of the chain corresponds to Y201–D219. Residues L220–I240 form a helical membrane-spanning segment. The Extracellular portion of the chain corresponds to S241–A251. Residues I252–L272 form a helical membrane-spanning segment. At H273–N285 the chain is on the cytoplasmic side. Residues A286–L303 traverse the membrane as a helical segment. The Extracellular segment spans residues P304–G306. The chain crosses the membrane as a helical span at residues S307 to L329. The Cytoplasmic segment spans residues E330–G346. The helical transmembrane segment at I347 to L367 threads the bilayer. Over Y368 to A396 the chain is Extracellular. The chain crosses the membrane as a helical span at residues A397–L417. Over R418–P460 the chain is Cytoplasmic.

It belongs to the ammonium transporter (TC 2.A.49) family. Rh subfamily. Homotrimer. In terms of processing, N-glycosylated.

It localises to the apical cell membrane. It carries out the reaction NH4(+)(in) = NH4(+)(out). It catalyses the reaction methylamine(out) = methylamine(in). The catalysed reaction is CO2(out) = CO2(in). In terms of biological role, ammonium transporter involved in the maintenance of acid-base homeostasis. Transports ammonium and its related derivative methylammonium across the plasma membrane of epithelial cells likely contributing to renal transepithelial ammonia transport and ammonia metabolism. Postulated to primarily mediate an electroneutral bidirectional transport of NH3 ammonia species according to a mechanism that implies interaction of an NH4(+) ion with acidic residues of the pore entry followed by dissociation of NH4(+) into NH3 and H(+). As a result NH3 transits through the central pore and is protonated on the extracellular side reforming NH4(+). May act as a CO2 channel providing for renal acid secretion. The protein is Ammonium transporter Rh type C (RHCG) of Bos taurus (Bovine).